The sequence spans 489 residues: Argininosuccinate lyase (489 aa).

A disordered region spans residues 1 to 20 (MSEPSAAVGQRPGGESAPAH).

It belongs to the lyase 1 family. Argininosuccinate lyase subfamily.

Its subcellular location is the cytoplasm. The enzyme catalyses 2-(N(omega)-L-arginino)succinate = fumarate + L-arginine. It functions in the pathway amino-acid biosynthesis; L-arginine biosynthesis; L-arginine from L-ornithine and carbamoyl phosphate: step 3/3. This chain is Argininosuccinate lyase, found in Acidothermus cellulolyticus (strain ATCC 43068 / DSM 8971 / 11B).